The sequence spans 706 residues: Elongation factor G (706 aa).

Residues 8–297 (ERVRNIGIAA…AVIDYLPAPT (290 aa)) form the tr-type G domain. GTP contacts are provided by residues 17–24 (AHIDAGKT), 96–100 (DTPGH), and 150–153 (NKMD).

Belongs to the TRAFAC class translation factor GTPase superfamily. Classic translation factor GTPase family. EF-G/EF-2 subfamily.

The protein localises to the cytoplasm. Its function is as follows. Catalyzes the GTP-dependent ribosomal translocation step during translation elongation. During this step, the ribosome changes from the pre-translocational (PRE) to the post-translocational (POST) state as the newly formed A-site-bound peptidyl-tRNA and P-site-bound deacylated tRNA move to the P and E sites, respectively. Catalyzes the coordinated movement of the two tRNA molecules, the mRNA and conformational changes in the ribosome. In Cyanothece sp. (strain PCC 7425 / ATCC 29141), this protein is Elongation factor G.